A 216-amino-acid chain; its full sequence is ATP-dependent Clp protease proteolytic subunit (216 aa).

S101 functions as the Nucleophile in the catalytic mechanism. The active site involves H126.

This sequence belongs to the peptidase S14 family. In terms of assembly, component of the chloroplastic Clp protease core complex.

It localises to the plastid. The protein resides in the chloroplast stroma. The enzyme catalyses Hydrolysis of proteins to small peptides in the presence of ATP and magnesium. alpha-casein is the usual test substrate. In the absence of ATP, only oligopeptides shorter than five residues are hydrolyzed (such as succinyl-Leu-Tyr-|-NHMec, and Leu-Tyr-Leu-|-Tyr-Trp, in which cleavage of the -Tyr-|-Leu- and -Tyr-|-Trp bonds also occurs).. Functionally, cleaves peptides in various proteins in a process that requires ATP hydrolysis. Has a chymotrypsin-like activity. Plays a major role in the degradation of misfolded proteins. The protein is ATP-dependent Clp protease proteolytic subunit of Zea mays (Maize).